Reading from the N-terminus, the 496-residue chain is Tyrosine-protein kinase Srms (496 aa).

The SH3 domain occupies Pro-55–Pro-116. The region spanning Trp-124–Cys-216 is the SH2 domain. The region spanning Phe-234–Leu-495 is the Protein kinase domain. Residues Leu-240–Val-248 and Lys-262 contribute to the ATP site. The Proton acceptor role is filled by Asp-354. Tyr-384 carries the phosphotyrosine; by autocatalysis modification.

It belongs to the protein kinase superfamily. Tyr protein kinase family. SRC subfamily. As to quaternary structure, interacts (via the SH2 and SH3 domains) with DOK1. Interacts with KHDRBS1/SAM68 and VIM. In terms of tissue distribution, higher expression in liver, lung, thymus and skin than in brain, kidney, heart and spleen. In skin, highly expressed in keratinocytes. Abundant in lung, liver, spleen, kidney and testis and is also detected in the cerebrum.

It is found in the cytoplasm. It carries out the reaction L-tyrosyl-[protein] + ATP = O-phospho-L-tyrosyl-[protein] + ADP + H(+). Functionally, non-receptor tyrosine-protein kinase which phosphorylates DOK1 on tyrosine residues. Also phosphorylates KHDRBS1/SAM68 and VIM on tyrosine residues. Phosphorylation of KHDRBS1 is EGF-dependent. Phosphorylates OTUB1, promoting deubiquitination of RPTOR. The sequence is that of Tyrosine-protein kinase Srms (Srms) from Mus musculus (Mouse).